A 90-amino-acid polypeptide reads, in one-letter code: uncharacterized protein (90 aa).

The protein resides in the mitochondrion. This is an uncharacterized protein from Ascobolus immersus.